The sequence spans 239 residues: MQRGALSPVLMLSAAPEPPPRPPPALSPPGSGPGSGSRHGSARPGPTPEPSGSLGAALDSSLRAAVAFKAEGQRCYREKKFREAIGKYHRALLQLKAAQGARPSGLPAPAPGPTSSPGPARLSEEQRRLVESTEVECYDSLTACLLQSELVNYERVREYCLKVLEKQQGNFKATYRAGIAFYHLGDYARALRYLQEARSREPTDTNVLRYIQLTQLKMNRCSLQREDSGAGSQTRDVIG.

Disordered regions lie at residues 1 to 57 (MQRG…LGAA) and 99 to 126 (QGAR…SEEQ). Phosphoserine is present on residues serine 7 and serine 27. The segment covering 16 to 31 (PEPPPRPPPALSPPGS) has biased composition (pro residues). One copy of the TPR 1 repeat lies at 65–99 (AVAFKAEGQRCYREKKFREAIGKYHRALLQLKAAQ). Positions 106–116 (LPAPAPGPTSS) are enriched in pro residues. The stretch at 171-204 (FKATYRAGIAFYHLGDYARALRYLQEARSREPTD) is one TPR 2 repeat.

Belongs to the TTC9 family.

In Homo sapiens (Human), this protein is Tetratricopeptide repeat protein 9B (TTC9B).